Reading from the N-terminus, the 383-residue chain is uncharacterized protein (383 aa).

4 disordered regions span residues 1 to 30 (MDLC…PTCT), 114 to 144 (ETKP…STAS), 262 to 289 (GEKR…ARTS), and 341 to 360 (AKDP…NSPQ). Acidic residues predominate over residues 10–26 (DLENGENNEIQSTEETE). Positions 128 to 141 (SSPSQTQAAPQGPS) are enriched in low complexity. The span at 262–271 (GEKRPSELAK) shows a compositional bias: basic and acidic residues.

This is an uncharacterized protein from Macaca fascicularis (Crab-eating macaque).